The primary structure comprises 545 residues: Glucose-6-phosphate isomerase (545 aa).

Glu-351 serves as the catalytic Proton donor. Catalysis depends on residues His-382 and Lys-510.

The protein belongs to the GPI family.

The protein resides in the cytoplasm. It catalyses the reaction alpha-D-glucose 6-phosphate = beta-D-fructose 6-phosphate. It functions in the pathway carbohydrate biosynthesis; gluconeogenesis. Its pathway is carbohydrate degradation; glycolysis; D-glyceraldehyde 3-phosphate and glycerone phosphate from D-glucose: step 2/4. Its function is as follows. Catalyzes the reversible isomerization of glucose-6-phosphate to fructose-6-phosphate. This chain is Glucose-6-phosphate isomerase, found in Shewanella sediminis (strain HAW-EB3).